Here is a 512-residue protein sequence, read N- to C-terminus: Sodium-dependent phosphate transport protein 1, chloroplastic (512 aa).

The N-terminal 59 residues, 1–59 (MNARALLCSSNIHSLYTSNRPPEKTSSSRSLRNLKPSPKSLRVWIYPRNRSSVFRVLVR), are a transit peptide targeting the chloroplast. The next 11 membrane-spanning stretches (helical) occupy residues 103–123 (WVIV…RVNM), 141–161 (VGLI…AGGI), 171–191 (VLGF…VAAK), 192–212 (LGLP…GVAM), 234–254 (LVYS…PFLI), 257–277 (FGWP…LTLW), 323–343 (VWAL…LLTW), 361–381 (LLSV…GWIA), 401–421 (IGFL…SPTM), 453–473 (GVLL…GTAA), and 486–506 (VFTI…LFST).

This sequence belongs to the major facilitator superfamily. Sodium/anion cotransporter (TC 2.A.1.14) family. Expressed in flower buds, sepals of mature flowers and mature leaves, less in senescent leaves and at low levels in roots.

It is found in the plastid. Its subcellular location is the chloroplast thylakoid membrane. Functionally, specific for inorganic phosphate transport across the thylakoid membrane in a sodium dependent manner. Binds glutamate but cannot transport it. May act as an ascorbate transporter at the thylakoid membrane. In Arabidopsis thaliana (Mouse-ear cress), this protein is Sodium-dependent phosphate transport protein 1, chloroplastic (ANTR1).